Reading from the N-terminus, the 353-residue chain is Photosystem II D2 protein (353 aa).

Thr2 bears the N-acetylthreonine mark. Position 2 is a phosphothreonine (Thr2). The helical transmembrane segment at 41–61 (CAYFALGGWFTGTTFVTSWYT) threads the bilayer. His118 is a binding site for chlorophyll a. Residues 125 to 141 (GFMLRQFELARSVQLRP) traverse the membrane as a helical segment. Pheophytin a contacts are provided by Gln130 and Asn143. A helical membrane pass occupies residues 153-166 (VFVSVFLIYPLGQS). Residue His198 participates in chlorophyll a binding. Residues 208–228 (AALLCAIHGATVENTLFEDGD) traverse the membrane as a helical segment. Positions 215 and 262 each coordinate a plastoquinone. His215 contributes to the Fe cation binding site. His269 provides a ligand contact to Fe cation. Residues 279 to 295 (GLWMSALGVVGLALNLR) traverse the membrane as a helical segment.

This sequence belongs to the reaction center PufL/M/PsbA/D family. In terms of assembly, PSII is composed of 1 copy each of membrane proteins PsbA, PsbB, PsbC, PsbD, PsbE, PsbF, PsbH, PsbI, PsbJ, PsbK, PsbL, PsbM, PsbT, PsbX, PsbY, PsbZ, Psb30/Ycf12, at least 3 peripheral proteins of the oxygen-evolving complex and a large number of cofactors. It forms dimeric complexes. The cofactor is The D1/D2 heterodimer binds P680, chlorophylls that are the primary electron donor of PSII, and subsequent electron acceptors. It shares a non-heme iron and each subunit binds pheophytin, quinone, additional chlorophylls, carotenoids and lipids. There is also a Cl(-1) ion associated with D1 and D2, which is required for oxygen evolution. The PSII complex binds additional chlorophylls, carotenoids and specific lipids..

The protein localises to the plastid. It is found in the chloroplast thylakoid membrane. The enzyme catalyses 2 a plastoquinone + 4 hnu + 2 H2O = 2 a plastoquinol + O2. Photosystem II (PSII) is a light-driven water:plastoquinone oxidoreductase that uses light energy to abstract electrons from H(2)O, generating O(2) and a proton gradient subsequently used for ATP formation. It consists of a core antenna complex that captures photons, and an electron transfer chain that converts photonic excitation into a charge separation. The D1/D2 (PsbA/PsbD) reaction center heterodimer binds P680, the primary electron donor of PSII as well as several subsequent electron acceptors. D2 is needed for assembly of a stable PSII complex. The polypeptide is Photosystem II D2 protein (Chloranthus spicatus (Chulantree)).